The primary structure comprises 436 residues: ATP-dependent protease ATPase subunit HslU (436 aa).

Residues Ile-18, 60-65 (GVGKTE), Asp-250, Glu-314, and Arg-386 each bind ATP.

This sequence belongs to the ClpX chaperone family. HslU subfamily. As to quaternary structure, a double ring-shaped homohexamer of HslV is capped on each side by a ring-shaped HslU homohexamer. The assembly of the HslU/HslV complex is dependent on binding of ATP.

It is found in the cytoplasm. ATPase subunit of a proteasome-like degradation complex; this subunit has chaperone activity. The binding of ATP and its subsequent hydrolysis by HslU are essential for unfolding of protein substrates subsequently hydrolyzed by HslV. HslU recognizes the N-terminal part of its protein substrates and unfolds these before they are guided to HslV for hydrolysis. The protein is ATP-dependent protease ATPase subunit HslU of Mesorhizobium japonicum (strain LMG 29417 / CECT 9101 / MAFF 303099) (Mesorhizobium loti (strain MAFF 303099)).